The sequence spans 477 residues: Peptidyl-prolyl cis-trans isomerase FKBP53 (477 aa).

Disordered stretches follow at residues 104–135 (DYEHDEDDSDGIDVGESEEDDSCEYDSEEDEQ) and 153–366 (AAAP…QVRT). Residues 264–274 (KSKKKKNQKEK) show a composition bias toward basic residues. The span at 299-321 (ISQISSNTKAQDGTANNAMSESS) shows a compositional bias: polar residues. Basic and acidic residues predominate over residues 322 to 331 (KTPDKSAEKK). Positions 351 to 366 (VEKQTPADSKSSQVRT) are enriched in polar residues. The PPIase FKBP-type domain occupies 389–477 (GKTVSVRYIG…TFDVELINVQ (89 aa)).

This sequence belongs to the FKBP-type PPIase family. In terms of assembly, interacts with histone H3. In terms of tissue distribution, broadly expressed in leaves, flowers, stems and roots. Detected in root apical meristem region and pollen.

The protein localises to the nucleus. The enzyme catalyses [protein]-peptidylproline (omega=180) = [protein]-peptidylproline (omega=0). In terms of biological role, PPIases accelerate the folding of proteins. It catalyzes the cis-trans isomerization of proline imidic peptide bonds in oligopeptides. Histone chaperone possibly involved in H3/H4 deposition to the nucleosome. Associates with 18S rDNA chromatin and negatively regulates the level of its expression. The polypeptide is Peptidyl-prolyl cis-trans isomerase FKBP53 (FKBP53) (Arabidopsis thaliana (Mouse-ear cress)).